The following is a 74-amino-acid chain: Large ribosomal subunit protein uL29 (74 aa).

Belongs to the universal ribosomal protein uL29 family.

This Streptomyces avermitilis (strain ATCC 31267 / DSM 46492 / JCM 5070 / NBRC 14893 / NCIMB 12804 / NRRL 8165 / MA-4680) protein is Large ribosomal subunit protein uL29.